Here is a 526-residue protein sequence, read N- to C-terminus: Glutamate--cysteine ligase (526 aa).

The protein belongs to the glutamate--cysteine ligase type 1 family. Type 1 subfamily.

It catalyses the reaction L-cysteine + L-glutamate + ATP = gamma-L-glutamyl-L-cysteine + ADP + phosphate + H(+). It participates in sulfur metabolism; glutathione biosynthesis; glutathione from L-cysteine and L-glutamate: step 1/2. This Proteus mirabilis (strain HI4320) protein is Glutamate--cysteine ligase.